The primary structure comprises 309 residues: Glutaminase (309 aa).

Positions 64, 114, 160, 167, 191, 243, and 261 each coordinate substrate.

Belongs to the glutaminase family. In terms of assembly, homotetramer.

The catalysed reaction is L-glutamine + H2O = L-glutamate + NH4(+). The polypeptide is Glutaminase (Methylobacterium sp. (strain 4-46)).